A 302-amino-acid chain; its full sequence is MTSGYYTVSFFYAILLLCACTRAEIYLTGGESQGLPSGFWQMDDDLAIAPVSMVEFYQTIGLTANGTVPESFNKRDATEYPNIISNITTQAANFTQHSLVEQLQNDVTAISISNAINVAVDGSVETPADLQYNRNQETGESTLCRAKFYGVEVRTWSRLYNRAVSSTTLTTNLNSYIAQWVAWAVHGSGDKKFCGSQEFTNIFFDGQEGWSLFVKTWSTNSSCDITASEGNLTCAVRVSVSSMHNHGKTAFCVTYSHGDSWRAELRVVANDAWSHYYPWSIDCPEVDKNNMAINDCFDQAQG.

A signal peptide spans 1–23 (MTSGYYTVSFFYAILLLCACTRA). 5 N-linked (GlcNAc...) asparagine glycosylation sites follow: asparagine 65, asparagine 86, asparagine 93, asparagine 220, and asparagine 231.

It to yeast killer toxin KHR.

This is an uncharacterized protein from Saccharomyces cerevisiae (strain ATCC 204508 / S288c) (Baker's yeast).